Consider the following 430-residue polypeptide: MSSSEGNSDASAPGTPVKSSTPSSRGSSPDSPKKQEPSKKRAILNESDDDDDSRPAPRQLSDSSDDNIHPRGGGEKSSPGAGGGLFGDLSGSSDDDSDREGKPKESNTRARLSDSDAESRGSLNDLQGIVMANPDEIDEDEKAKEHVHDTEMVTGRVTLEYAADPPHFVRMPNFLSVATHPFDPQHYEEDEDDEQAKLDDEGRTRLKLRVENTLRWRVRKDENGKEIRESNAKIVKWDDGTMSLYLGNEIFEVSLVPLNSNNLPHLYVKQPTLMSAQAVLTHRMTFRPHSTDSQTHRKVTLNMADRSRKNAQVKVMDDVGQNPEITRRENARKEEESLRAHIRRTQMVRNNFKVRGPRYAGQYSDDEDMPTSSRKGKKKEAPIIGASSESEDDHADTTKKSGSDSDSDEEYRKRKQQQKKQIVTSDEESD.

The segment covering Met1 to Ala10 has biased composition (polar residues). The tract at residues Met1–Gly128 is disordered. Positions Lys18–Asp30 are enriched in low complexity. The span at Arg99–Ser119 shows a compositional bias: basic and acidic residues. 2 coiled-coil regions span residues Thr326 to Met347 and Glu409 to Ser429. The segment at Arg349–Asp430 is disordered.

The protein belongs to the LEO1 family. As to quaternary structure, component of the PAF1 complex which consists of at least cdc-73, ctr-9, leo-1, pafo-1 and rtfo-1.

Its subcellular location is the nucleus. The protein localises to the cytoplasm. In terms of biological role, component of the PAF1 complex which is a multifunctional complex involved in transcription initiation via genetic interactions with TATA-binding proteins, elongation and transcription-coupled histone modification. The polypeptide is RNA polymerase-associated protein LEO1 (Caenorhabditis elegans).